Reading from the N-terminus, the 425-residue chain is Nuclear hormone receptor family member nhr-13 (425 aa).

Residues 5-83 constitute a DNA-binding region (nuclear receptor); it reads PNSCEVCSSS…IGMKPLLVKS (79 aa). NR C4-type zinc fingers lie at residues 11–30 and 46–71; these read CSSS…CKAC and CIDQ…LKKC. Positions 108–148 are disordered; sequence VKENSEEIQNDDDPQESDAEMENESTPGPSSEPSENVSAEN. Positions 113 to 130 are enriched in acidic residues; that stretch reads EEIQNDDDPQESDAEMEN. Over residues 131–142 the composition is skewed to low complexity; the sequence is ESTPGPSSEPSE. Residues 147-414 enclose the NR LBD domain; that stretch reads ENQETVTKFL…KSMISLTSFW (268 aa).

Belongs to the nuclear hormone receptor family. In terms of assembly, may interact with nuclear hormone receptor nhr-49.

It localises to the nucleus. Functionally, orphan nuclear receptor. Involved in regulating fatty acid desaturase genes, acting in concert with nuclear hormone receptor nhr-49. This chain is Nuclear hormone receptor family member nhr-13 (nhr-13), found in Caenorhabditis elegans.